A 90-amino-acid chain; its full sequence is MVKNAFISVISQEEKEENKGSAEFQVFNFTNKIRRLTSHLELHRKDYLSQRGLRKILGKRQRLLAYLSKKNKVRYKELISQLDIREPKIR.

Belongs to the universal ribosomal protein uS15 family. In terms of assembly, part of the 30S ribosomal subunit.

The protein localises to the plastid. Its subcellular location is the chloroplast. The polypeptide is Small ribosomal subunit protein uS15c (rps15) (Platanus occidentalis (Sycamore)).